Reading from the N-terminus, the 306-residue chain is Polyadenylate-binding protein 2 (306 aa).

Positions 1–12 (MAAAAAAAAAAG) are enriched in low complexity. The tract at residues 1 to 115 (MAAAAAAAAA…EGDPGDGAIE (115 aa)) is disordered. Alanine 2 is subject to N-acetylalanine. Residues 2–145 (AAAAAAAAAA…LKELQNEVEK (144 aa)) are interaction with SKIP. Arginine 17 carries the omega-N-methylarginine modification. Serine 19 bears the Phosphoserine mark. The span at 30–47 (GAGGEAGEGAPGGAGDYG) shows a compositional bias: gly residues. Positions 51–72 (ESEELEPEELLLEPEPEPEPEE) are enriched in acidic residues. Serine 52 carries the phosphoserine modification. Positions 77–87 (PRAPPGAPGPG) are enriched in pro residues. A coiled-coil region spans residues 115-151 (EDPELEAIKARVREMEEEAEKLKELQNEVEKQMNMSP). The tract at residues 119–147 (LEAIKARVREMEEEAEKLKELQNEVEKQM) is stimulates PAPOLA. Serine 150 and serine 235 each carry phosphoserine. The necessary for homooligomerization stretch occupies residues 155-306 (NAGPVIMSIE…ARATSWYSPY (152 aa)). Residues 172-249 (RSIYVGNVDY…RQIKVIPKRT (78 aa)) form the RRM domain. Residues arginine 238, arginine 259, and arginine 263 each carry the asymmetric dimethylarginine; alternate modification. Arginine 238, arginine 259, and arginine 263 each carry omega-N-methylarginine; alternate. Residues arginine 265, arginine 267, arginine 269, arginine 277, arginine 279, arginine 287, arginine 289, arginine 291, arginine 294, arginine 296, and arginine 298 each carry the asymmetric dimethylarginine modification. The interaction with PAPOLA stretch occupies residues 286 to 306 (SRPRGRVYRGRARATSWYSPY).

Monomer and homooligomer. Binds RNA as a monomer and oligomerizes when bound to poly(A). Associates in a ternary complex with CPSF4 and NS/NS1 and interaction with NS/NS1, blocks nuclear export of host cell mRNAs. Associates in a single complex with SKIP and MYOD1 and interacts with SKIP in differentiated myocytes. Interacts with NUDT21/CPSF5. Identified in a IGF2BP1-dependent mRNP granule complex containing untranslated mRNAs. Interacts with PAPOLA, but only in presence of oligo(A) RNA. Interacts with transportin. May interact with SETX. Interacts (via RRM domain and C-terminal arginine-rich region) with ZFP36 (via hypophosphorylated form); this interaction occurs in the nucleus in a RNA-independent manner, decreases in presence of single-stranded poly(A) RNA-oligomer and in a p38-dependent-manner and may down-regulated RNA poly(A) polymerase activity. Component of the poly(A) tail exosome targeting (PAXT) complex composed of PABPN1, ZFC3H1 and MTREX. Interacts with ZFC3H1 in a RNase-insensitive manner. Interacts with FRG1. Interacts with ZC3H11A. Arginine dimethylation is asymmetric and involves PRMT1 and PRMT3. It does not influence the RNA binding properties. Ubiquitous.

Its subcellular location is the nucleus. It is found in the cytoplasm. It localises to the nucleus speckle. Its function is as follows. Involved in the 3'-end formation of mRNA precursors (pre-mRNA) by the addition of a poly(A) tail of 200-250 nt to the upstream cleavage product. Stimulates poly(A) polymerase (PAPOLA) conferring processivity on the poly(A) tail elongation reaction and also controls the poly(A) tail length. Increases the affinity of poly(A) polymerase for RNA. Is also present at various stages of mRNA metabolism including nucleocytoplasmic trafficking and nonsense-mediated decay (NMD) of mRNA. Cooperates with SKIP to synergistically activate E-box-mediated transcription through MYOD1 and may regulate the expression of muscle-specific genes. Binds to poly(A) and to poly(G) with high affinity. May protect the poly(A) tail from degradation. Subunit of the trimeric poly(A) tail exosome targeting (PAXT) complex, a complex that directs a subset of long and polyadenylated poly(A) RNAs for exosomal degradation. The RNA exosome is fundamental for the degradation of RNA in eukaryotic nuclei. Substrate targeting is facilitated by its cofactor MTREX, which links to RNA-binding protein adapters. The sequence is that of Polyadenylate-binding protein 2 (PABPN1) from Bos taurus (Bovine).